Here is a 95-residue protein sequence, read N- to C-terminus: DNA-directed RNA polymerase subunit omega (95 aa).

It belongs to the RNA polymerase subunit omega family. In terms of assembly, the RNAP catalytic core consists of 2 alpha, 1 beta, 1 beta' and 1 omega subunit. When a sigma factor is associated with the core the holoenzyme is formed, which can initiate transcription.

It carries out the reaction RNA(n) + a ribonucleoside 5'-triphosphate = RNA(n+1) + diphosphate. Its function is as follows. Promotes RNA polymerase assembly. Latches the N- and C-terminal regions of the beta' subunit thereby facilitating its interaction with the beta and alpha subunits. The chain is DNA-directed RNA polymerase subunit omega from Colwellia psychrerythraea (strain 34H / ATCC BAA-681) (Vibrio psychroerythus).